Here is a 134-residue protein sequence, read N- to C-terminus: Small ribosomal subunit protein uS8 (134 aa).

It belongs to the universal ribosomal protein uS8 family. In terms of assembly, part of the 30S ribosomal subunit. Contacts proteins S5 and S12.

One of the primary rRNA binding proteins, it binds directly to 16S rRNA central domain where it helps coordinate assembly of the platform of the 30S subunit. This is Small ribosomal subunit protein uS8 from Thermotoga sp. (strain RQ2).